The chain runs to 331 residues: Glycerol-3-phosphate dehydrogenase [NAD(P)+] (331 aa).

Residues tryptophan 11, arginine 30, and lysine 105 each contribute to the NADPH site. The sn-glycerol 3-phosphate site is built by lysine 105, glycine 134, and serine 136. Position 138 (alanine 138) interacts with NADPH. Sn-glycerol 3-phosphate contacts are provided by lysine 189, aspartate 242, serine 252, arginine 253, and asparagine 254. Catalysis depends on lysine 189, which acts as the Proton acceptor. Residue arginine 253 participates in NADPH binding. Positions 277 and 279 each coordinate NADPH.

It belongs to the NAD-dependent glycerol-3-phosphate dehydrogenase family.

Its subcellular location is the cytoplasm. It carries out the reaction sn-glycerol 3-phosphate + NAD(+) = dihydroxyacetone phosphate + NADH + H(+). The catalysed reaction is sn-glycerol 3-phosphate + NADP(+) = dihydroxyacetone phosphate + NADPH + H(+). It participates in membrane lipid metabolism; glycerophospholipid metabolism. Its function is as follows. Catalyzes the reduction of the glycolytic intermediate dihydroxyacetone phosphate (DHAP) to sn-glycerol 3-phosphate (G3P), the key precursor for phospholipid synthesis. This chain is Glycerol-3-phosphate dehydrogenase [NAD(P)+], found in Herminiimonas arsenicoxydans.